A 254-amino-acid chain; its full sequence is Kallikrein-4 (254 aa).

A signal peptide spans 1-26 (MATAGNPWGWFLGYLILGVAGSLVSG). The propeptide occupies 27-30 (SCSQ). Residues 31–252 (IINGEDCSPH…FTEWIEKTVQ (222 aa)) form the Peptidase S1 domain. 6 cysteine pairs are disulfide-bonded: Cys-37–Cys-167, Cys-56–Cys-72, Cys-141–Cys-241, Cys-148–Cys-213, Cys-178–Cys-192, and Cys-203–Cys-228. His-40 lines the Zn(2+) pocket. The active-site Charge relay system is the His-71. Glu-91 lines the Zn(2+) pocket. Asp-116 functions as the Charge relay system in the catalytic mechanism. N-linked (GlcNAc...) asparagine glycosylation is present at Asn-169. Ser-207 functions as the Charge relay system in the catalytic mechanism.

The protein belongs to the peptidase S1 family. Kallikrein subfamily. Post-translationally, N-glycosylated. The N-glycan structures are of complex diantennary or triantennary type, which may be further modified with up to 2 sialic acid residues. Expressed in prostate.

The protein resides in the secreted. Has a major role in enamel formation. Required during the maturation stage of tooth development for clearance of enamel proteins and normal structural patterning of the crystalline matrix. This is Kallikrein-4 (KLK4) from Homo sapiens (Human).